The sequence spans 240 residues: MKRSKNLRAADAKVDRERNYAPLEAVRLAKETSSTKFDGTVEVAFALGVDPRKADQMVRGTVNLPHGTGKTARVLVFATGDRAAAAEAAGADIVGADELIDEVAKGRLDFDAVVATPDLMGKVGRLGRVLGPRGLMPNPKTGTVTPDVVKAVNDIKGGKIEFRVDKHSNLHFIIGKVSFDETKLVENYAAALEEILRLKPSAAKGRYIKKATLATTMGPGIPLDANRTRNLLVEEDPASV.

The protein belongs to the universal ribosomal protein uL1 family. Part of the 50S ribosomal subunit.

Binds directly to 23S rRNA. The L1 stalk is quite mobile in the ribosome, and is involved in E site tRNA release. Its function is as follows. Protein L1 is also a translational repressor protein, it controls the translation of the L11 operon by binding to its mRNA. This is Large ribosomal subunit protein uL1 from Streptomyces griseus subsp. griseus (strain JCM 4626 / CBS 651.72 / NBRC 13350 / KCC S-0626 / ISP 5235).